A 381-amino-acid polypeptide reads, in one-letter code: Creatine kinase M-type (381 aa).

The Phosphagen kinase N-terminal domain maps to 11–98 (KLKFSAEEEF…FDPVIQDRHG (88 aa)). The disordered stretch occupies residues 99–118 (GYKPTDKHRTDLNHENLKGG). The Phosphagen kinase C-terminal domain maps to 125–367 (YVLSSRVRTG…KLMVEMEKKL (243 aa)). Residues 128-132 (SSRVR), His191, Arg236, Arg292, 320-325 (RGTGGV), and Asp335 contribute to the ATP site.

The protein belongs to the ATP:guanido phosphotransferase family. As to quaternary structure, dimer of identical or non-identical chains, which can be either B (brain type) or M (muscle type). With MM being the major form in skeletal muscle and myocardium, MB existing in myocardium, and BB existing in many tissues, especially brain. In terms of tissue distribution, predominantly found in skeletal muscle, but not in the heart.

The protein resides in the cytoplasm. It catalyses the reaction creatine + ATP = N-phosphocreatine + ADP + H(+). Its function is as follows. Reversibly catalyzes the transfer of phosphate between ATP and various phosphogens (e.g. creatine phosphate). Creatine kinase isoenzymes play a central role in energy transduction in tissues with large, fluctuating energy demands, such as skeletal muscle, heart, brain and spermatozoa. The chain is Creatine kinase M-type from Gallus gallus (Chicken).